The sequence spans 665 residues: Transketolase 1 (665 aa).

Histidine 26 contacts substrate. Residues histidine 66 and 114-116 contribute to the thiamine diphosphate site; that span reads GPL. Aspartate 155 lines the Mg(2+) pocket. The thiamine diphosphate site is built by glycine 156 and asparagine 185. Mg(2+)-binding residues include asparagine 185 and isoleucine 187. Histidine 261, arginine 358, and serine 385 together coordinate substrate. Histidine 261 provides a ligand contact to thiamine diphosphate. The Proton donor role is filled by glutamate 412. Residue phenylalanine 438 coordinates thiamine diphosphate. 3 residues coordinate substrate: histidine 462, aspartate 470, and arginine 521.

This sequence belongs to the transketolase family. Homodimer. The cofactor is Mg(2+). Requires Ca(2+) as cofactor. Mn(2+) serves as cofactor. Co(2+) is required as a cofactor. It depends on thiamine diphosphate as a cofactor.

It carries out the reaction D-sedoheptulose 7-phosphate + D-glyceraldehyde 3-phosphate = aldehydo-D-ribose 5-phosphate + D-xylulose 5-phosphate. Catalyzes the transfer of a two-carbon ketol group from a ketose donor to an aldose acceptor, via a covalent intermediate with the cofactor thiamine pyrophosphate. The sequence is that of Transketolase 1 (tkt1) from Vibrio cholerae serotype O1 (strain ATCC 39315 / El Tor Inaba N16961).